The chain runs to 912 residues: Protein SLFN14 (912 aa).

The interval 206-391 is required for endoribonuclease activity; the sequence is ESTHVEFKRF…KVHKFKEALQ (186 aa). The segment at 392 to 571 is required for ribosome binding; sequence RHLFPVTQEE…QMGCEFFNLL (180 aa). Residue 593 to 600 participates in ATP binding; it reads CFPGVRKT.

This sequence belongs to the Schlafen family. Subgroup III subfamily. In terms of assembly, associates with ribosomes in an ATP-independent manner. Requires Mg(2+) as cofactor. Mn(2+) serves as cofactor. Expressed in megakaryocytes and platelets (at protein level). Weakly expressed in melanocytes and malignant melanoma cells.

Its subcellular location is the nucleus. Functionally, shows no ribosome-associated and endoribonuclease activities. Displays polysome-associated endoribonuclease activity towards mRNAs and rRNAs. May play a role in RNA surveillance pathways by recognizing stalled ribosomes and triggering endonucleolytic cleavage of aberrant mRNAs. Cleaves different types of rRNAs and mRNAs in a magnesium- and manganese-dependent and ATP-independent manner. Involved in correct maturation of megakaryocytes and especially important for proplatelet extension. The sequence is that of Protein SLFN14 from Homo sapiens (Human).